A 445-amino-acid chain; its full sequence is Phosphoglucosamine mutase (445 aa).

Serine 102 serves as the catalytic Phosphoserine intermediate. Serine 102, aspartate 241, aspartate 243, and aspartate 245 together coordinate Mg(2+). Serine 102 carries the phosphoserine modification.

The protein belongs to the phosphohexose mutase family. Mg(2+) is required as a cofactor. In terms of processing, activated by phosphorylation.

The enzyme catalyses alpha-D-glucosamine 1-phosphate = D-glucosamine 6-phosphate. In terms of biological role, catalyzes the conversion of glucosamine-6-phosphate to glucosamine-1-phosphate. The chain is Phosphoglucosamine mutase from Pectobacterium carotovorum subsp. carotovorum (strain PC1).